The primary structure comprises 41 residues: Large ribosomal subunit protein bL36 (41 aa).

The protein belongs to the bacterial ribosomal protein bL36 family.

The sequence is that of Large ribosomal subunit protein bL36 from Rickettsia massiliae (strain Mtu5).